Reading from the N-terminus, the 305-residue chain is Ornithine carbamoyltransferase, anabolic (305 aa).

Carbamoyl phosphate is bound by residues 53 to 56 (STRT), glutamine 80, arginine 104, and 131 to 134 (HPCQ). L-ornithine is bound by residues asparagine 162, aspartate 219, and 223-224 (SM). Carbamoyl phosphate contacts are provided by residues 259–260 (CL) and arginine 287.

It belongs to the aspartate/ornithine carbamoyltransferase superfamily. OTCase family. As to quaternary structure, homotrimer.

The protein resides in the cytoplasm. The enzyme catalyses carbamoyl phosphate + L-ornithine = L-citrulline + phosphate + H(+). It functions in the pathway amino-acid biosynthesis; L-arginine biosynthesis; L-arginine from L-ornithine and carbamoyl phosphate: step 1/3. In terms of biological role, reversibly catalyzes the transfer of the carbamoyl group from carbamoyl phosphate (CP) to the N(epsilon) atom of ornithine (ORN) to produce L-citrulline, which is a substrate for argininosuccinate synthetase (ArgG) involved in the final step in arginine biosynthesis. The chain is Ornithine carbamoyltransferase, anabolic from Pseudomonas aeruginosa (strain ATCC 15692 / DSM 22644 / CIP 104116 / JCM 14847 / LMG 12228 / 1C / PRS 101 / PAO1).